A 437-amino-acid polypeptide reads, in one-letter code: tRNA-2-methylthio-N(6)-dimethylallyladenosine synthase (437 aa).

Positions 1–115 (MKVYIETMGC…ISQVIHKEKA (115 aa)) constitute an MTTase N-terminal domain. Residues Cys-10, Cys-46, Cys-78, Cys-148, Cys-152, and Cys-155 each contribute to the [4Fe-4S] cluster site. The Radical SAM core domain occupies 134-367 (KKAQIRSLLN…QNRHKEILEE (234 aa)). The TRAM domain occupies 370 to 436 (KLEVGKTHVV…KGRLIAAIKG (67 aa)).

The protein belongs to the methylthiotransferase family. MiaB subfamily. As to quaternary structure, monomer. [4Fe-4S] cluster is required as a cofactor.

The protein localises to the cytoplasm. The catalysed reaction is N(6)-dimethylallyladenosine(37) in tRNA + (sulfur carrier)-SH + AH2 + 2 S-adenosyl-L-methionine = 2-methylsulfanyl-N(6)-dimethylallyladenosine(37) in tRNA + (sulfur carrier)-H + 5'-deoxyadenosine + L-methionine + A + S-adenosyl-L-homocysteine + 2 H(+). Functionally, catalyzes the methylthiolation of N6-(dimethylallyl)adenosine (i(6)A), leading to the formation of 2-methylthio-N6-(dimethylallyl)adenosine (ms(2)i(6)A) at position 37 in tRNAs that read codons beginning with uridine. The sequence is that of tRNA-2-methylthio-N(6)-dimethylallyladenosine synthase from Helicobacter pylori (strain P12).